The sequence spans 947 residues: Bifunctional glutamine synthetase adenylyltransferase/adenylyl-removing enzyme (947 aa).

Residues 1–440 (MTPLSSPLSQ…VFNELIGDDE (440 aa)) are adenylyl removase. The interval 450-947 (SEPWREVWQD…ASWRKWLVAV (498 aa)) is adenylyl transferase.

This sequence belongs to the GlnE family. The cofactor is Mg(2+).

It catalyses the reaction [glutamine synthetase]-O(4)-(5'-adenylyl)-L-tyrosine + phosphate = [glutamine synthetase]-L-tyrosine + ADP. The enzyme catalyses [glutamine synthetase]-L-tyrosine + ATP = [glutamine synthetase]-O(4)-(5'-adenylyl)-L-tyrosine + diphosphate. In terms of biological role, involved in the regulation of glutamine synthetase GlnA, a key enzyme in the process to assimilate ammonia. When cellular nitrogen levels are high, the C-terminal adenylyl transferase (AT) inactivates GlnA by covalent transfer of an adenylyl group from ATP to specific tyrosine residue of GlnA, thus reducing its activity. Conversely, when nitrogen levels are low, the N-terminal adenylyl removase (AR) activates GlnA by removing the adenylyl group by phosphorolysis, increasing its activity. The regulatory region of GlnE binds the signal transduction protein PII (GlnB) which indicates the nitrogen status of the cell. The polypeptide is Bifunctional glutamine synthetase adenylyltransferase/adenylyl-removing enzyme (Salmonella newport (strain SL254)).